A 905-amino-acid polypeptide reads, in one-letter code: Phosphatidylethanolamine N-methyltransferase (905 aa).

Composition is skewed to polar residues over residues 1 to 22 (MTNQIPSASSAADFGSSKSTSV) and 40 to 58 (DSNGLQQTNQIEQAESSLN). Residues 1-73 (MTNQIPSASS…SEPERYGCTP (73 aa)) are disordered. Topologically, residues 1 to 104 (MTNQIPSASS…DPRFSKTPWD (104 aa)) are lumenal. Residues 105 to 125 (WIVISSILAQVLLFFMTTGAV) form a helical membrane-spanning segment. The Cytoplasmic segment spans residues 126 to 128 (RRY). The chain crosses the membrane as a helical span at residues 129–149 (SMMLCFFFWRISYDAGIGFLL). Over 150–209 (HMQSNHRKVVTWISDFGFFDKENHPKLYDLTKKQLISKMDSSYNYDTSPLEFNSWLVFRH) the chain is Lumenal. A helical membrane pass occupies residues 210–230 (FVDLILMCDFCSYILMGLAWT). At 231 to 236 (CWPKVN) the chain is on the cytoplasmic side. The helical transmembrane segment at 237–257 (IILQFLRIFGGIALIVFNYWV) threads the bilayer. At 258-268 (KMDAHRVVRDY) the chain is on the lumenal side. A helical transmembrane segment spans residues 269–289 (AWYWGDFFFLLRSSLVFNGVF). At 290–313 (ELAPHPMYSVGYAGYYGMSLLTGS) the chain is on the cytoplasmic side. A helical membrane pass occupies residues 314-334 (YAVLFASILAHAAQFGFLLFV). The Lumenal segment spans residues 335-379 (ENPHIERTYGTDINHARLSPRGEDNEFELPPEHDLVGFVNFDFTR). Ser353 carries the post-translational modification Phosphoserine. Residues 380–400 (ISDVALLIIALYSIFIILLSS) form a helical membrane-spanning segment. Residues 401–408 (NSHYSQFW) are Cytoplasmic-facing. The helical transmembrane segment at 409–429 (AIFQAFVWRFLHSIIHAFILF) threads the bilayer. The Lumenal segment spans residues 430–456 (YQSKSKAWTKHFIRNGESAAYAWSQWK). A helical transmembrane segment spans residues 457–479 (GLYNLTLNMSYISFVMAAWKLYH). The Cytoplasmic segment spans residues 480–493 (LPSNWTYGLVSLRH). The helical transmembrane segment at 494 to 514 (ALGFGLIALHIYTSVSIYEDL) threads the bilayer. Residues 515–552 (GQYGWFYGDFFLPSRSPKLVYQGIYRYVNNPERFLGCS) lie on the Lumenal side of the membrane. The helical transmembrane segment at 553–573 (AYWGLALISSSAWIFLIAILA) threads the bilayer. Residues 574–905 (QLSNLAIIRL…FDGPSGAKDD (332 aa)) are Cytoplasmic-facing.

It belongs to the class VI-like SAM-binding methyltransferase superfamily. CHO2 family.

It localises to the endoplasmic reticulum membrane. It carries out the reaction a 1,2-diacyl-sn-glycero-3-phosphoethanolamine + S-adenosyl-L-methionine = a 1,2-diacyl-sn-glycero-3-phospho-N-methylethanolamine + S-adenosyl-L-homocysteine + H(+). It functions in the pathway phospholipid metabolism; phosphatidylcholine biosynthesis. Functionally, catalyzes the first step of the methylation pathway of phosphatidylcholine biosynthesis, the SAM-dependent methylation of phosphatidylethanolamine (PE) to phosphatidylmonomethylethanolamine (PMME). The chain is Phosphatidylethanolamine N-methyltransferase from Schizosaccharomyces pombe (strain 972 / ATCC 24843) (Fission yeast).